The primary structure comprises 2017 residues: Rootletin (2017 aa).

Coiled coils occupy residues 70–262 (ATEM…KVTN) and 318–444 (ERDL…LETE). Positions 464–483 (SESGVQLSGSERTADASNGS) are enriched in polar residues. The interval 464-518 (SESGVQLSGSERTADASNGSLRGLSGQRTPSPPRRSSPGRGRSPRRGPSPACSDS) is disordered. The segment covering 499–513 (SSPGRGRSPRRGPSP) has biased composition (low complexity). Coiled coils occupy residues 546 to 1058 (QDLL…LAES) and 1091 to 1438 (EMER…GLRS). 2 disordered regions span residues 1184-1226 (LRES…RSAV) and 1443-1575 (GLGL…GRLS). Phosphoserine is present on residues Ser-1460, Ser-1470, Ser-1476, Ser-1483, Ser-1486, Ser-1490, and Ser-1496. Positions 1505–1704 (EAVRGALREF…DSEVKAGTLQ (200 aa)) form a coiled coil. Positions 1510-1529 (ALREFLQELRSAQRERDELR) are enriched in basic and acidic residues. Phosphoserine occurs at positions 1575 and 1660. A disordered region spans residues 1962–2017 (RSAQAQTERTLEARERAHRQRVRGLEEQVSTLKGQLQQELRRSSAPFSPPSGPPEK). Positions 1989 to 1999 (QVSTLKGQLQQ) are enriched in polar residues. Pro residues predominate over residues 2008-2017 (FSPPSGPPEK).

Belongs to the rootletin family. In terms of assembly, homomer. Interacts with KLC3, NEK2 and the N-terminus of CEP250. Interacts with CEP44. Interacts with CCDC102B (via N-terminus). In terms of processing, phosphorylated by NEK2 which may regulate its association with centrosomes.

The protein localises to the cytoplasm. Its subcellular location is the cytoskeleton. It is found in the microtubule organizing center. The protein resides in the centrosome. It localises to the centriole. The protein localises to the cilium basal body. Its function is as follows. Major structural component of the ciliary rootlet, a cytoskeletal-like structure in ciliated cells which originates from the basal body at the proximal end of a cilium and extends proximally toward the cell nucleus. Furthermore, is required for the correct positioning of the cilium basal body relative to the cell nucleus, to allow for ciliogenesis. Contributes to centrosome cohesion before mitosis. The protein is Rootletin of Homo sapiens (Human).